The chain runs to 33 residues: Brevinin-2Eb (33 aa).

Cysteine 27 and cysteine 33 form a disulfide bridge.

Belongs to the frog skin active peptide (FSAP) family. Brevinin subfamily. Expressed by the skin glands.

The protein resides in the secreted. Functionally, shows antibacterial activity against representative Gram-negative and Gram-positive bacterial species, and hemolytic activity. The polypeptide is Brevinin-2Eb (Pelophylax lessonae (Pool frog)).